The sequence spans 266 residues: Eukaryotic translation initiation factor 3 subunit J (266 aa).

Disordered stretches follow at residues 1–111 and 217–266; these read MAPS…EKDA and NEKM…DDFM. Acidic residues predominate over residues 26–44; it reads DEEEEDVLDSWDAAEDSEV. Residues 40 to 82 are a coiled coil; that stretch reads EDSEVEREKAAKAAEAKAKAEAEAAANKKSKAQRIQEKKAQRK. 2 stretches are compositionally biased toward basic and acidic residues: residues 45–61 and 73–85; these read EREK…KAEA and RIQE…KADA. Positions 86–97 are enriched in acidic residues; that stretch reads DAEDSDDSDEDE. Composition is skewed to basic and acidic residues over residues 98 to 111 and 218 to 230; these read AERR…EKDA and EKMK…DKGN. The segment covering 254 to 266 has biased composition (acidic residues); sequence SYDDDGLDDDDFM.

The protein belongs to the eIF-3 subunit J family. As to quaternary structure, component of the eukaryotic translation initiation factor 3 (eIF-3) complex.

The protein resides in the cytoplasm. Component of the eukaryotic translation initiation factor 3 (eIF-3) complex, which is involved in protein synthesis of a specialized repertoire of mRNAs and, together with other initiation factors, stimulates binding of mRNA and methionyl-tRNAi to the 40S ribosome. The eIF-3 complex specifically targets and initiates translation of a subset of mRNAs involved in cell proliferation. The chain is Eukaryotic translation initiation factor 3 subunit J (hcr1) from Aspergillus niger (strain ATCC MYA-4892 / CBS 513.88 / FGSC A1513).